The sequence spans 70 residues: Conotoxin TsMLKM-011 (70 aa).

Positions 1–24 are cleaved as a signal peptide; sequence MLKMGVVLFVFLVLFPLATLQLDA. The propeptide occupies 25–54; the sequence is DQPVERYAENKQLVSPYERRQIILHALGQR. 3 disulfides stabilise this stretch: C56–C66, C57–C68, and C62–C69.

The protein belongs to the conotoxin M superfamily. Expressed by the venom duct.

It localises to the secreted. This Conus tessulatus (Tessellate cone) protein is Conotoxin TsMLKM-011.